Consider the following 1456-residue polypeptide: Putative 1-phosphatidylinositol-3-phosphate 5-kinase FAB1D (1456 aa).

Low complexity predominate over residues 1-19; the sequence is MTPSNSLSSSERSLSGECS. Disordered stretches follow at residues 1 to 110, 533 to 592, 925 to 944, 967 to 987, 1003 to 1022, and 1137 to 1159; these read MTPS…EVDG, PVSV…NDIE, ENDNKVSDSGSNGGIDTPLV, VPEDNESQTLCSSSPDTTSPI, NGQEADKSIPVTGESLDDEV, and NNQDSKQTDRDVSRFSSESTNRL. A compositionally biased stretch (basic and acidic residues) spans 43–57; the sequence is ELTKEVKVDRLERKS. A compositionally biased stretch (acidic residues) spans 86–110; sequence REDDSDDVPVWEPPEPENPEDEVDG. The span at 533 to 544 shows a compositional bias: low complexity; that stretch reads PVSVDTDVSTTS. Residues 973–987 show a composition bias toward polar residues; sequence SQTLCSSSPDTTSPI. The 329-residue stretch at 1115–1443 folds into the PIPK domain; the sequence is NNEESKKPLS…RFRKFMKTHF (329 aa). The span at 1150–1159 shows a compositional bias: polar residues; the sequence is RFSSESTNRL.

Component of the PI(3,5)P2 regulatory complex at least composed of ATG18, SAC/FIG4, FAB1 and VAC14. The cofactor is Mg(2+). It depends on Mn(2+) as a cofactor.

It catalyses the reaction a 1,2-diacyl-sn-glycero-3-phospho-(1D-myo-inositol-3-phosphate) + ATP = a 1,2-diacyl-sn-glycero-3-phospho-(1D-myo-inositol-3,5-bisphosphate) + ADP + H(+). Its function is as follows. The PI(3,5)P2 regulatory complex regulates both the synthesis and turnover of phosphatidylinositol 3,5-bisphosphate (PtdIns(3,5)P2). Catalyzes the phosphorylation of phosphatidylinositol 3-phosphate on the fifth hydroxyl of the myo-inositol ring, to form phosphatidylinositol 3,5-bisphosphate. This Arabidopsis thaliana (Mouse-ear cress) protein is Putative 1-phosphatidylinositol-3-phosphate 5-kinase FAB1D (FAB1D).